The following is a 319-amino-acid chain: Aliphatic sulfonates import ATP-binding protein SsuB 1 (319 aa).

An ABC transporter domain is found at 63–282; sequence VTLSGVSKRF…ARASAAFAAL (220 aa). An ATP-binding site is contributed by 95 to 102; it reads GRSGCGKS.

The protein belongs to the ABC transporter superfamily. Aliphatic sulfonates importer (TC 3.A.1.17.2) family. As to quaternary structure, the complex is composed of two ATP-binding proteins (SsuB), two transmembrane proteins (SsuC) and a solute-binding protein (SsuA).

Its subcellular location is the cell inner membrane. The catalysed reaction is ATP + H2O + aliphatic sulfonate-[sulfonate-binding protein]Side 1 = ADP + phosphate + aliphatic sulfonateSide 2 + [sulfonate-binding protein]Side 1.. Its function is as follows. Part of the ABC transporter complex SsuABC involved in aliphatic sulfonates import. Responsible for energy coupling to the transport system. The polypeptide is Aliphatic sulfonates import ATP-binding protein SsuB 1 (Burkholderia lata (strain ATCC 17760 / DSM 23089 / LMG 22485 / NCIMB 9086 / R18194 / 383)).